Consider the following 512-residue polypeptide: Cytochrome P450 72A11 (512 aa).

A helical membrane pass occupies residues 2 to 22 (EISVASVTVSVAVVVVSWWVW). Residue cysteine 460 coordinates heme.

The protein belongs to the cytochrome P450 family. Heme serves as cofactor.

It is found in the membrane. This chain is Cytochrome P450 72A11 (CYP72A11), found in Arabidopsis thaliana (Mouse-ear cress).